The following is a 466-amino-acid chain: Sulfate adenylyltransferase subunit 1 (466 aa).

The 216-residue stretch at 22 to 237 (KELVRFLTCG…LNTIDVKTQE (216 aa)) folds into the tr-type G domain. Positions 31–38 (GSVDDGKS) are G1. GTP is bound at residue 31–38 (GSVDDGKS). Residues 89 to 93 (GITID) are G2. The segment at 110–113 (DTPG) is G3. GTP is bound by residues 110–114 (DTPGH) and 165–168 (NKMD). Residues 165–168 (NKMD) are G4. Residues 202–204 (SAL) form a G5 region.

This sequence belongs to the TRAFAC class translation factor GTPase superfamily. Classic translation factor GTPase family. CysN/NodQ subfamily. Heterodimer composed of CysD, the smaller subunit, and CysN.

It carries out the reaction sulfate + ATP + H(+) = adenosine 5'-phosphosulfate + diphosphate. The protein operates within sulfur metabolism; hydrogen sulfide biosynthesis; sulfite from sulfate: step 1/3. Functionally, with CysD forms the ATP sulfurylase (ATPS) that catalyzes the adenylation of sulfate producing adenosine 5'-phosphosulfate (APS) and diphosphate, the first enzymatic step in sulfur assimilation pathway. APS synthesis involves the formation of a high-energy phosphoric-sulfuric acid anhydride bond driven by GTP hydrolysis by CysN coupled to ATP hydrolysis by CysD. This Colwellia psychrerythraea (strain 34H / ATCC BAA-681) (Vibrio psychroerythus) protein is Sulfate adenylyltransferase subunit 1.